Here is an 88-residue protein sequence, read N- to C-terminus: Mini zinc finger protein 3 (88 aa).

The segment at 26–72 adopts a ZF-HD dimerization-type; degenerate zinc-finger fold; sequence YVECQKNHAANIGGYAVDGCREFMASGGDDALTCAACGCHRNFHRRE.

Homo- and heterodimers. Interacts with ZHD3, ZHD5, ZHD6, ZHD7, ZHD8, ZHD9, ZHD10 and ZHD13. In terms of tissue distribution, mostly expressed in roots, stems and flowers, present in seedlings and leaves, and weakly observed in inflorescence and siliques.

It localises to the cytoplasm. Its function is as follows. Inhibits zinc finger homeodomain (ZHD) transcription factors by interacting with them to prevent both their nuclear localization and their DNA-binding properties. Involved in integrating signals from multiple hormones by regulating the expression of specific genes. Promotes the formation of ectopic shoot meristems on leaf margins. The polypeptide is Mini zinc finger protein 3 (MIF3) (Arabidopsis thaliana (Mouse-ear cress)).